Consider the following 249-residue polypeptide: Glucosamine-6-phosphate deaminase (249 aa).

Asp-67 (proton acceptor; for enolization step) is an active-site residue. Residue Asn-136 is the For ring-opening step of the active site. The active-site Proton acceptor; for ring-opening step is the His-138. Glu-143 serves as the catalytic For ring-opening step.

The protein belongs to the glucosamine/galactosamine-6-phosphate isomerase family. NagB subfamily.

The enzyme catalyses alpha-D-glucosamine 6-phosphate + H2O = beta-D-fructose 6-phosphate + NH4(+). It functions in the pathway amino-sugar metabolism; N-acetylneuraminate degradation; D-fructose 6-phosphate from N-acetylneuraminate: step 5/5. Catalyzes the reversible isomerization-deamination of glucosamine 6-phosphate (GlcN6P) to form fructose 6-phosphate (Fru6P) and ammonium ion. The polypeptide is Glucosamine-6-phosphate deaminase (Clostridioides difficile (strain 630) (Peptoclostridium difficile)).